Reading from the N-terminus, the 83-residue chain is Cytochrome c5 (83 aa).

4 residues coordinate heme c: C15, C18, H19, and M59. A disulfide bridge connects residues C65 and C68.

It belongs to the cytochrome c family. In terms of assembly, homodimer. Post-translationally, binds 1 heme c group covalently per subunit.

Its function is as follows. It is unreactive with cytochrome c reductase or oxidase. The protein is Cytochrome c5 of Azotobacter vinelandii.